We begin with the raw amino-acid sequence, 162 residues long: MLPPTIRISGLAKTLHIPSRSPLQALKGSFILLNKRKFHYSPFILQEKVQSSNHTIRSDTKLWKRLLKITGKQAHQFKDKPFSHIFAFLFLHELSAILPLPIFFFIFHSLDWTPTGLPGEYLQKGSHVAASIFAKLGYNLPLEKVSKTLLDGAAAYAVVKVC.

A mitochondrion-targeting transit peptide spans M1–L45. Topologically, residues Q46–H84 are mitochondrial matrix. A helical transmembrane segment spans residues I85 to F105. At I106–K124 the chain is on the mitochondrial intermembrane side. Residues G125–L142 traverse the membrane as a helical segment. Residues E143 to C162 are Mitochondrial matrix-facing.

Belongs to the MRX11 family. As to quaternary structure, associates with the mitochondrial ribosome.

The protein resides in the mitochondrion. The protein localises to the mitochondrion inner membrane. Its function is as follows. Component of MIOREX complexes, large expressome-like assemblies of ribosomes with factors involved in all the steps of post-transcriptional gene expression. This is MIOREX complex component 11 (mrx11) from Schizosaccharomyces pombe (strain 972 / ATCC 24843) (Fission yeast).